The chain runs to 210 residues: Probable molybdenum cofactor guanylyltransferase (210 aa).

GTP contacts are provided by residues 18–20 (LAG), K31, N59, D86, and D111. D111 is a binding site for Mg(2+).

It belongs to the MobA family. It depends on Mg(2+) as a cofactor.

It localises to the cytoplasm. The enzyme catalyses Mo-molybdopterin + GTP + H(+) = Mo-molybdopterin guanine dinucleotide + diphosphate. In terms of biological role, transfers a GMP moiety from GTP to Mo-molybdopterin (Mo-MPT) cofactor (Moco or molybdenum cofactor) to form Mo-molybdopterin guanine dinucleotide (Mo-MGD) cofactor. In Haloferax mediterranei (strain ATCC 33500 / DSM 1411 / JCM 8866 / NBRC 14739 / NCIMB 2177 / R-4) (Halobacterium mediterranei), this protein is Probable molybdenum cofactor guanylyltransferase (nasC).